Consider the following 157-residue polypeptide: 6,7-dimethyl-8-ribityllumazine synthase (157 aa).

Residues F22, 57 to 59, and 81 to 83 each bind 5-amino-6-(D-ribitylamino)uracil; these read AYE and TVI. 86 to 87 contributes to the (2S)-2-hydroxy-3-oxobutyl phosphate binding site; it reads GT. H89 serves as the catalytic Proton donor. A 5-amino-6-(D-ribitylamino)uracil-binding site is contributed by F114. Residue R128 coordinates (2S)-2-hydroxy-3-oxobutyl phosphate.

This sequence belongs to the DMRL synthase family. As to quaternary structure, forms an icosahedral capsid composed of 60 subunits, arranged as a dodecamer of pentamers.

The catalysed reaction is (2S)-2-hydroxy-3-oxobutyl phosphate + 5-amino-6-(D-ribitylamino)uracil = 6,7-dimethyl-8-(1-D-ribityl)lumazine + phosphate + 2 H2O + H(+). The protein operates within cofactor biosynthesis; riboflavin biosynthesis; riboflavin from 2-hydroxy-3-oxobutyl phosphate and 5-amino-6-(D-ribitylamino)uracil: step 1/2. Its function is as follows. Catalyzes the formation of 6,7-dimethyl-8-ribityllumazine by condensation of 5-amino-6-(D-ribitylamino)uracil with 3,4-dihydroxy-2-butanone 4-phosphate. This is the penultimate step in the biosynthesis of riboflavin. This chain is 6,7-dimethyl-8-ribityllumazine synthase, found in Haemophilus influenzae (strain ATCC 51907 / DSM 11121 / KW20 / Rd).